The following is a 339-amino-acid chain: Glyceraldehyde-3-phosphate dehydrogenase (339 aa).

Residues 12–13 (RI), D34, and K79 contribute to the NAD(+) site. D-glyceraldehyde 3-phosphate-binding positions include 150-152 (SCT), T181, 210-211 (TG), and R233. The active-site Nucleophile is the C151. N316 is a binding site for NAD(+).

The protein belongs to the glyceraldehyde-3-phosphate dehydrogenase family. In terms of assembly, homotetramer.

The protein localises to the cytoplasm. It catalyses the reaction D-glyceraldehyde 3-phosphate + phosphate + NAD(+) = (2R)-3-phospho-glyceroyl phosphate + NADH + H(+). The protein operates within carbohydrate degradation; glycolysis; pyruvate from D-glyceraldehyde 3-phosphate: step 1/5. This is Glyceraldehyde-3-phosphate dehydrogenase (GPD) from Cryptococcus neoformans var. neoformans serotype D (strain B-3501A) (Filobasidiella neoformans).